The sequence spans 128 residues: Light-regulated protein, chloroplastic (128 aa).

A run of 2 repeats spans residues 58–72 and 111–125. Residues 58–125 are 2 X 15 AA approximate repeats; it reads VFPMEACDLI…ACDDLGGEFC (68 aa).

Component of high molecular weight thylakoid LFNRs-containing protein complexes containing LIR1, LFNR1, LFNR2, TIC62 and TROL proteins. Interacts directly with LFNR1 and LFNR2; LIR1 increases the affinity of LFNR1 and LFNR2 for TIC62 and subsequent thylakoid relocalization. In terms of processing, may form interchain disulfide bonds with LFNR1 and LFNR2.

The protein localises to the plastid. It is found in the chloroplast thylakoid membrane. Its subcellular location is the chloroplast envelope. The protein resides in the chloroplast stroma. Its function is as follows. Thylakoid-determinant subunit of high molecular weight LFNRs-containing protein complexes. In Oryza sativa subsp. japonica (Rice), this protein is Light-regulated protein, chloroplastic (LIR1).